The sequence spans 211 residues: Nucleoside triphosphate pyrophosphatase (211 aa).

D76 functions as the Proton acceptor in the catalytic mechanism.

Belongs to the Maf family. A divalent metal cation serves as cofactor.

The protein resides in the cytoplasm. It carries out the reaction a ribonucleoside 5'-triphosphate + H2O = a ribonucleoside 5'-phosphate + diphosphate + H(+). It catalyses the reaction a 2'-deoxyribonucleoside 5'-triphosphate + H2O = a 2'-deoxyribonucleoside 5'-phosphate + diphosphate + H(+). Functionally, nucleoside triphosphate pyrophosphatase. May have a dual role in cell division arrest and in preventing the incorporation of modified nucleotides into cellular nucleic acids. The chain is Nucleoside triphosphate pyrophosphatase from Saccharopolyspora erythraea (strain ATCC 11635 / DSM 40517 / JCM 4748 / NBRC 13426 / NCIMB 8594 / NRRL 2338).